The primary structure comprises 220 residues: Nitrile hydratase subunit beta (220 aa).

Belongs to the nitrile hydratase subunit beta family. In terms of assembly, heterodimer of an alpha and a beta chain.

It catalyses the reaction an aliphatic primary amide = an aliphatic nitrile + H2O. Functionally, NHase catalyzes the hydration of various nitrile compounds to the corresponding amides. The protein is Nitrile hydratase subunit beta (nthB) of Pseudomonas chlororaphis (Pseudomonas aureofaciens).